Consider the following 168-residue polypeptide: Cyclin-dependent kinase 4 inhibitor C (168 aa).

5 ANK repeats span residues 4 to 33 (PWGNELASAAARGDLEQLTSLLQNNVNVNA), 37 to 65 (FGRTALQVMKLGNPEIARRLLLRGANPNL), 69 to 98 (TGFAVIHDAARAGFLDTVQALLEFQADVNI), 102 to 132 (EGNLPLHLAAKEGHLPVVEFLMKHTACNVGH), and 136 to 165 (KGDTAFDLARFYGRNEVISLMEANGVGGAT).

It belongs to the CDKN2 cyclin-dependent kinase inhibitor family. Heterodimer of p18 with CDK6.

Functionally, interacts strongly with CDK6, weakly with CDK4. Inhibits cell growth and proliferation with a correlated dependence on endogenous retinoblastoma protein RB. This chain is Cyclin-dependent kinase 4 inhibitor C (Cdkn2c), found in Mus musculus (Mouse).